The chain runs to 155 residues: Ribosomal RNA large subunit methyltransferase H (155 aa).

S-adenosyl-L-methionine is bound by residues leucine 72, glycine 103, and 122 to 127 (LSDLTL).

The protein belongs to the RNA methyltransferase RlmH family. In terms of assembly, homodimer.

It is found in the cytoplasm. It carries out the reaction pseudouridine(1915) in 23S rRNA + S-adenosyl-L-methionine = N(3)-methylpseudouridine(1915) in 23S rRNA + S-adenosyl-L-homocysteine + H(+). In terms of biological role, specifically methylates the pseudouridine at position 1915 (m3Psi1915) in 23S rRNA. In Acidovorax sp. (strain JS42), this protein is Ribosomal RNA large subunit methyltransferase H.